Reading from the N-terminus, the 316-residue chain is Galectin-8 (316 aa).

Galectin domains are found at residues 18–151 and 186–316; these read YVST…IGFR and FEAR…VRSW. A carbohydrate is bound by residues arginine 68, asparagine 78, and glutamate 88. 248-254 contributes to the a beta-D-galactoside binding site; sequence WGEEERN.

As to quaternary structure, homodimer. Interacts with CALCOCO2/NDP52. Interacts with PDPN; the interaction is glycosylation-dependent; may participate in connection of the lymphatic endothelium to the surrounding extracellular matrix. As to expression, expressed in liver, kidney, cardiac muscle, lung, and brain.

It localises to the cytoplasmic vesicle. Its subcellular location is the cytoplasm. The protein resides in the cytosol. In terms of biological role, beta-galactoside-binding lectin that acts as a sensor of membrane damage caused by infection and restricts the proliferation of infecting pathogens by targeting them for autophagy. Detects membrane rupture by binding beta-galactoside ligands located on the lumenal side of the endosome membrane; these ligands becoming exposed to the cytoplasm following rupture. Restricts infection by initiating autophagy via interaction with CALCOCO2/NDP52. Required to restrict infection of bacterial invasion such as S.typhimurium. Also required to restrict infection of Picornaviridae viruses. Has a marked preference for 3'-O-sialylated and 3'-O-sulfated glycans. The chain is Galectin-8 (Lgals8) from Rattus norvegicus (Rat).